A 479-amino-acid polypeptide reads, in one-letter code: Aspartyl/glutamyl-tRNA(Asn/Gln) amidotransferase subunit B (479 aa).

It belongs to the GatB/GatE family. GatB subfamily. In terms of assembly, heterotrimer of A, B and C subunits.

The catalysed reaction is L-glutamyl-tRNA(Gln) + L-glutamine + ATP + H2O = L-glutaminyl-tRNA(Gln) + L-glutamate + ADP + phosphate + H(+). The enzyme catalyses L-aspartyl-tRNA(Asn) + L-glutamine + ATP + H2O = L-asparaginyl-tRNA(Asn) + L-glutamate + ADP + phosphate + 2 H(+). Functionally, allows the formation of correctly charged Asn-tRNA(Asn) or Gln-tRNA(Gln) through the transamidation of misacylated Asp-tRNA(Asn) or Glu-tRNA(Gln) in organisms which lack either or both of asparaginyl-tRNA or glutaminyl-tRNA synthetases. The reaction takes place in the presence of glutamine and ATP through an activated phospho-Asp-tRNA(Asn) or phospho-Glu-tRNA(Gln). In Geobacter sp. (strain M21), this protein is Aspartyl/glutamyl-tRNA(Asn/Gln) amidotransferase subunit B.